The chain runs to 541 residues: Mesoderm induction early response protein 2 (541 aa).

S11 is subject to Phosphoserine. Disordered stretches follow at residues 100–119 (DPISEQESEGGDTAPALPDM) and 131–186 (LSGE…EEDA). A compositionally biased stretch (polar residues) spans 140–165 (QSSADDLTPSVTSHEASDLFHNQSGS). An ELM2 domain is found at 194 to 291 (KEIMVGPQFQ…EALRRLRFNV (98 aa)). Residues 296–348 (DGLCAWSEEECRNFEHGFRVHGKNFHLIQANKVRTRSVGECVEYYYLWKKSER) enclose the SANT domain. Residues 364–440 (VSSGTTDTEQ…EPPAVPSLQQ (77 aa)) form a disordered region.

Part of a complex containing at least CDYL, MIER1, MIER2, HDAC1 and HDAC2.

Its subcellular location is the nucleus. In terms of biological role, transcriptional repressor. This chain is Mesoderm induction early response protein 2 (Mier2), found in Mus musculus (Mouse).